Here is a 268-residue protein sequence, read N- to C-terminus: Undecaprenyl-diphosphatase (268 aa).

8 helical membrane passes run 9–29, 47–67, 83–103, 107–127, 144–164, 184–204, 218–238, and 246–266; these read VILG…TGHL, FDVL…FAKL, FIIG…AAGS, LFLF…AVLL, FPVL…IPGV, AAEF…VYDL, IVAV…KTFL, and FQLF…ALAM.

The protein belongs to the UppP family.

The protein resides in the cell inner membrane. The catalysed reaction is di-trans,octa-cis-undecaprenyl diphosphate + H2O = di-trans,octa-cis-undecaprenyl phosphate + phosphate + H(+). Catalyzes the dephosphorylation of undecaprenyl diphosphate (UPP). Confers resistance to bacitracin. The protein is Undecaprenyl-diphosphatase of Rhodopseudomonas palustris (strain HaA2).